A 291-amino-acid polypeptide reads, in one-letter code: ATP synthase gamma chain (291 aa).

The protein belongs to the ATPase gamma chain family. In terms of assembly, F-type ATPases have 2 components, CF(1) - the catalytic core - and CF(0) - the membrane proton channel. CF(1) has five subunits: alpha(3), beta(3), gamma(1), delta(1), epsilon(1). CF(0) has three main subunits: a, b and c.

The protein localises to the cell inner membrane. In terms of biological role, produces ATP from ADP in the presence of a proton gradient across the membrane. The gamma chain is believed to be important in regulating ATPase activity and the flow of protons through the CF(0) complex. The sequence is that of ATP synthase gamma chain from Burkholderia pseudomallei (strain 1106a).